Here is a 93-residue protein sequence, read N- to C-terminus: Bublin coiled-coil protein (93 aa).

Disordered stretches follow at residues 1–26 and 74–93; these read MAGP…GDTF and QQQS…QPPA. Over residues 17 to 26 the composition is skewed to acidic residues; sequence DEGDEGGDTF. A coiled-coil region spans residues 59–80; sequence LKELLESNRQTRLEFQQQSKQL.

It belongs to the UPF0184 (EST00098) family.

Its subcellular location is the cell junction. The protein resides in the cytoplasm. It localises to the cytoskeleton. Essential for intermediate filament organization in intestinal cells, interacts with intermediate filament and regulates intestinal lumen morphology. The protein is Bublin coiled-coil protein (BBLN) of Taeniopygia guttata (Zebra finch).